The chain runs to 439 residues: AP-2 complex subunit mu (439 aa).

Residues 172–438 (RNELYIDVVE…LTKAGTYQNR (267 aa)) form the MHD domain.

The protein belongs to the adaptor complexes medium subunit family. In terms of assembly, adaptor protein complex 2 (AP-2) is a heterotetramer composed of two large adaptins (alpha-type and beta-type subunits), a medium adaptin (mu-type subunit AP50) and a small adaptin (sigma-type subunit AP17). Post-translationally, phosphorylated.

Its subcellular location is the cell membrane. It localises to the membrane. The protein localises to the coated pit. Component of the adaptor complexes which link clathrin to receptors in coated vesicles. Clathrin-associated protein complexes are believed to interact with the cytoplasmic tails of membrane proteins, leading to their selection and concentration. AP50 is a subunit of the plasma membrane adaptor. The protein is AP-2 complex subunit mu (apm2) of Dictyostelium discoideum (Social amoeba).